The primary structure comprises 313 residues: Peroxidase 57 (313 aa).

Positions 1 to 22 are cleaved as a signal peptide; sequence MMKGAKFSSLLVLFFIFPIAFA. 4 disulfides stabilise this stretch: Cys-33–Cys-109, Cys-66–Cys-71, Cys-115–Cys-309, and Cys-192–Cys-224. Residue His-64 is the Proton acceptor of the active site. Residues Asp-65, Val-68, Gly-70, Asp-72, and Ser-74 each coordinate Ca(2+). Pro-155 contributes to the substrate binding site. His-185 contributes to the heme b binding site. Thr-186 contacts Ca(2+). Residues Asp-233, Ser-236, and Asp-241 each coordinate Ca(2+).

The protein belongs to the peroxidase family. Classical plant (class III) peroxidase subfamily. Heme b serves as cofactor. The cofactor is Ca(2+). In terms of tissue distribution, mainly expressed in roots.

Its subcellular location is the secreted. The catalysed reaction is 2 a phenolic donor + H2O2 = 2 a phenolic radical donor + 2 H2O. Its function is as follows. Removal of H(2)O(2), oxidation of toxic reductants, biosynthesis and degradation of lignin, suberization, auxin catabolism, response to environmental stresses such as wounding, pathogen attack and oxidative stress. These functions might be dependent on each isozyme/isoform in each plant tissue. The protein is Peroxidase 57 (PER57) of Arabidopsis thaliana (Mouse-ear cress).